Here is a 1368-residue protein sequence, read N- to C-terminus: MAP3K epsilon protein kinase 1 (1368 aa).

Residues 20–274 form the Protein kinase domain; sequence YMLGDEIGKG…AKTLLSHPWI (255 aa). HEAT repeat units lie at residues 25 to 62 and 86 to 125; these read EIGK…EDLN and SKTK…AVYI. ATP contacts are provided by residues 26 to 34 and lysine 49; that span reads IGKGAYGRV. Residue aspartate 144 is the Proton acceptor of the active site. The stretch at 218 to 256 is one HEAT 3 repeat; the sequence is PYYDLQPMPALFRIVQDDNPPIPDSLSPDITDFLRQCFK. Disordered regions lie at residues 296-415 and 430-507; these read EATA…KNTS and QTSH…PVAD. A compositionally biased stretch (acidic residues) spans 351–364; sequence LGEEGTDNSEDDIM. Composition is skewed to basic and acidic residues over residues 388–399 and 470–486; these read SDFHGKSERGET and SLHD…EGKP. Residues 488-502 are compositionally biased toward polar residues; the sequence is EASTSMPTSNVNQGD. HEAT repeat units follow at residues 533-571, 628-653, 654-695, 699-737, and 750-788; these read SNDG…LFPL, IPKS…DFQE, NACL…SSPL, MFIA…VFKL, and AAKN…RVRS. A disordered region spans residues 777–883; sequence GGLDGQAPRV…ISLSANRTST (107 aa). The span at 791 to 808 shows a compositional bias: polar residues; it reads LDPNNPIFGQNETSSLSM. 2 stretches are compositionally biased toward basic and acidic residues: residues 813-826 and 836-852; these read DVLK…EEPS and SDVH…DKPR. HEAT repeat units lie at residues 903-940, 1025-1063, 1067-1105, 1112-1150, 1154-1191, 1196-1234, 1258-1281, 1282-1318, and 1348-1368; these read EQVR…HESR, ATSS…ADTT, YMCS…DPNC, ADAI…INKR, QAAE…ASRN, LRAH…DNRK, RHFV…NKTL, AVNG…HHPR, and QVLV…NTIL.

Belongs to the protein kinase superfamily. Ser/Thr protein kinase family. In terms of assembly, interacts with SGP1. In terms of processing, autophosphorylated. In terms of tissue distribution, expressed in both the sporophytic and the gametophytic tissues, especially in dividing cells. Mostly present in flower buds and mature flowers. Also accumulates in embryos, in roots apices, trichomes and ovule integuments.

It localises to the cytoplasm. Its subcellular location is the cytoskeleton. The protein resides in the microtubule organizing center. The protein localises to the nucleus. It is found in the nucleolus. It localises to the cell membrane. It carries out the reaction L-seryl-[protein] + ATP = O-phospho-L-seryl-[protein] + ADP + H(+). The catalysed reaction is L-threonyl-[protein] + ATP = O-phospho-L-threonyl-[protein] + ADP + H(+). Functionally, serine/threonine-protein kinase involved in the spatial and temporal control system organizing cortical activities in mitotic and postmitotic cells. Required for the normal functioning of the plasma membrane in developing pollen. Involved in the regulation of cell expansion, cell elongation, and embryo development. The sequence is that of MAP3K epsilon protein kinase 1 from Arabidopsis thaliana (Mouse-ear cress).